We begin with the raw amino-acid sequence, 130 residues long: Small ribosomal subunit protein uS9 (130 aa).

This sequence belongs to the universal ribosomal protein uS9 family.

The sequence is that of Small ribosomal subunit protein uS9 from Nitratidesulfovibrio vulgaris (strain ATCC 29579 / DSM 644 / CCUG 34227 / NCIMB 8303 / VKM B-1760 / Hildenborough) (Desulfovibrio vulgaris).